A 341-amino-acid chain; its full sequence is GDP-mannose transporter GONST5 (341 aa).

Helical transmembrane passes span 17 to 37 (LSIL…KWIF), 44 to 64 (FPLS…YIVI), 89 to 109 (FVFC…PVSF), 141 to 161 (LVPI…FNVF), 192 to 212 (INTV…PAFL), 233 to 253 (IILF…FYVI), 260 to 280 (TFNV…WMIF), and 284 to 304 (ISPM…FYGY). The 120-residue stretch at 33-152 (NKWIFQKLDF…PIVGGILLTS (120 aa)) folds into the EamA domain.

Belongs to the TPT transporter family. TPT (TC 2.A.7.9) subfamily. Expressed in rosette leaves, flowers and siliques.

The protein resides in the golgi apparatus membrane. GDP-mannose transporter that may be involved in the import of GDP-mannose from the cytoplasm into the Golgi lumen. This Arabidopsis thaliana (Mouse-ear cress) protein is GDP-mannose transporter GONST5 (GONST5).